The sequence spans 538 residues: UNC93-like protein (538 aa).

The N-linked (GlcNAc...) asparagine glycan is linked to Asn45. 5 helical membrane passes run 46–66 (ISII…TANL), 80–100 (SLSA…TLII), 105–125 (VKWT…FQLF), 128–148 (FYTL…MWAS), and 170–190 (AIIV…ELWG). N-linked (GlcNAc...) asparagine glycosylation is present at Asn210. 7 helical membrane-spanning segments follow: residues 244-264 (IFEI…IIAF), 305-325 (LLIP…ADFT), 338-358 (IGFV…LFGS), 366-386 (TPII…ELFW), 394-414 (IIFY…QTQI), 435-455 (LWES…CTQM), and 457-477 (LYIL…VEIL).

The protein belongs to the unc-93 family.

It is found in the membrane. This is UNC93-like protein from Drosophila melanogaster (Fruit fly).